The following is an 871-amino-acid chain: Alanine--tRNA ligase (871 aa).

Zn(2+)-binding residues include H561, H565, C662, and H666.

Belongs to the class-II aminoacyl-tRNA synthetase family. Zn(2+) serves as cofactor.

It is found in the cytoplasm. It catalyses the reaction tRNA(Ala) + L-alanine + ATP = L-alanyl-tRNA(Ala) + AMP + diphosphate. Its function is as follows. Catalyzes the attachment of alanine to tRNA(Ala) in a two-step reaction: alanine is first activated by ATP to form Ala-AMP and then transferred to the acceptor end of tRNA(Ala). Also edits incorrectly charged Ser-tRNA(Ala) and Gly-tRNA(Ala) via its editing domain. The polypeptide is Alanine--tRNA ligase (Dechloromonas aromatica (strain RCB)).